The sequence spans 196 residues: MRLCAGLLLLCFQGCLSLTGPGSVSGYVGGSLRVQCQYSPSYKGYMKYWCRGPHDTTCKTIVETDGSEKEKRSGPVSIRDHASNSTITVIMEDLSEDNAGSYWCKIQTSFIWDSWSRDPSVSVRVNVFPATTPTLPATTAILPLVNSGQNLRISTNVMFIFQLWSLLSSIQFQVLVFLKLPLFLSMLCAIFWVNRL.

The N-terminal stretch at 1-17 (MRLCAGLLLLCFQGCLS) is a signal peptide. In terms of domain architecture, Ig-like V-type spans 18–122 (LTGPGSVSGY…DSWSRDPSVS (105 aa)). The Extracellular segment spans residues 18–171 (LTGPGSVSGY…QLWSLLSSIQ (154 aa)). Residues cysteine 36 and cysteine 104 are joined by a disulfide bond. Asparagine 84 carries N-linked (GlcNAc...) asparagine glycosylation. Residues 172–192 (FQVLVFLKLPLFLSMLCAIFW) traverse the membrane as a helical segment. The Cytoplasmic portion of the chain corresponds to 193 to 196 (VNRL).

The protein belongs to the CD300 family. Interacts with TYROBP.

It is found in the cell membrane. Probably acts as an activating receptor. This chain is CMRF35-like molecule 2 (Cd300e), found in Mus musculus (Mouse).